Here is a 113-residue protein sequence, read N- to C-terminus: Nucleoid-associated protein ROP_41370 (113 aa).

Belongs to the YbaB/EbfC family. In terms of assembly, homodimer.

The protein localises to the cytoplasm. It is found in the nucleoid. Its function is as follows. Binds to DNA and alters its conformation. May be involved in regulation of gene expression, nucleoid organization and DNA protection. The protein is Nucleoid-associated protein ROP_41370 of Rhodococcus opacus (strain B4).